A 76-amino-acid chain; its full sequence is Acyl carrier protein (76 aa).

In terms of domain architecture, Carrier spans 1-75 (MVFEKIKALI…DIVFYITKNT (75 aa)). The residue at position 35 (S35) is an O-(pantetheine 4'-phosphoryl)serine.

This sequence belongs to the acyl carrier protein (ACP) family. 4'-phosphopantetheine is transferred from CoA to a specific serine of apo-ACP by AcpS. This modification is essential for activity because fatty acids are bound in thioester linkage to the sulfhydryl of the prosthetic group.

It localises to the cytoplasm. It participates in lipid metabolism; fatty acid biosynthesis. Functionally, carrier of the growing fatty acid chain in fatty acid biosynthesis. The polypeptide is Acyl carrier protein (Onion yellows phytoplasma (strain OY-M)).